Reading from the N-terminus, the 238-residue chain is Neuromodulin (238 aa).

The interval 1–238 is disordered; the sequence is MLCCMRRTKQ…EEPEADQEHA (238 aa). S-palmitoyl cysteine attachment occurs at residues cysteine 3 and cysteine 4. A compositionally biased stretch (basic and acidic residues) spans 9 to 32; it reads KQVEKNDDDQKIEQDGIKPEDKAH. The 30-residue stretch at 31–60 folds into the IQ domain; it reads AHKAATKIQASFRGHITRKKLKGEKKDDVQ. Phosphoserine; by PHK and PKC is present on serine 41. The span at 54–83 shows a compositional bias: basic and acidic residues; the sequence is EKKDDVQAAEAEANKKDEAPVADGVEKKGE. Over residues 84 to 95 the composition is skewed to low complexity; sequence GTTTAEAAPATG. Over residues 97–116 the composition is skewed to basic and acidic residues; sequence KPDEPGKAGETPSEEKKGEG. Residues 119-130 are compositionally biased toward low complexity; the sequence is ATEQAAPQAPAS. Over residues 139–154 the composition is skewed to polar residues; sequence ETESATKASTDNSPSS. 3 positions are modified to phosphoserine: serine 151, serine 153, and serine 154. The span at 155–167 shows a compositional bias: basic and acidic residues; that stretch reads KAEDAPAKEEPKQ. The segment covering 168–199 has biased composition (low complexity); that stretch reads ADVPAAVTAAAATTPAAEDAAAKATAQPPTET. At threonine 181 the chain carries Phosphothreonine. Residues serine 202 and serine 203 each carry the phosphoserine; by CK2 modification. Basic and acidic residues predominate over residues 213–225; it reads DETKPKESARQDE. Over residues 226–238 the composition is skewed to acidic residues; it reads GKEEEPEADQEHA.

Belongs to the neuromodulin family. In terms of assembly, identified in a complex containing FGFR4, NCAM1, CDH2, PLCG1, FRS2, SRC, SHC1, GAP43 and CTTN. Interacts (via IQ domain) with calmodulin. Binds calmodulin with a greater affinity in the absence of Ca(2+) than in its presence. In terms of processing, phosphorylated. Phosphorylation of this protein by a protein kinase C is specifically correlated with certain forms of synaptic plasticity. Post-translationally, palmitoylated by ZDHHC3. Palmitoylation is regulated by ARF6 and is essential for plasma membrane association and axonal and dendritic filopodia induction. Deacylated by LYPLA2.

It is found in the cell membrane. Its subcellular location is the cell projection. It localises to the growth cone membrane. The protein resides in the synapse. The protein localises to the filopodium membrane. It is found in the perikaryon. Its subcellular location is the dendrite. It localises to the axon. The protein resides in the cytoplasm. This protein is associated with nerve growth. It is a major component of the motile 'growth cones' that form the tips of elongating axons. Plays a role in axonal and dendritic filopodia induction. The protein is Neuromodulin (GAP43) of Homo sapiens (Human).